Here is a 147-residue protein sequence, read N- to C-terminus: Large ribosomal subunit protein uL16c (147 aa).

The span at 1–17 (MLSPKRTRFRKQHRGRM) shows a compositional bias: basic residues. Positions 1–20 (MLSPKRTRFRKQHRGRMKGI) are disordered.

Belongs to the universal ribosomal protein uL16 family. Part of the 50S ribosomal subunit.

The protein localises to the plastid. The protein resides in the chloroplast. This chain is Large ribosomal subunit protein uL16c, found in Ipomoea purpurea (Common morning glory).